Reading from the N-terminus, the 115-residue chain is Aspartate 1-decarboxylase (115 aa).

Residue serine 25 is the Schiff-base intermediate with substrate; via pyruvic acid of the active site. Serine 25 bears the Pyruvic acid (Ser) mark. Residue threonine 57 participates in substrate binding. Residue tyrosine 58 is the Proton donor of the active site. 72–74 (GAA) contributes to the substrate binding site.

The protein belongs to the PanD family. In terms of assembly, heterooctamer of four alpha and four beta subunits. Pyruvate serves as cofactor. Is synthesized initially as an inactive proenzyme, which is activated by self-cleavage at a specific serine bond to produce a beta-subunit with a hydroxyl group at its C-terminus and an alpha-subunit with a pyruvoyl group at its N-terminus.

It localises to the cytoplasm. It catalyses the reaction L-aspartate + H(+) = beta-alanine + CO2. The protein operates within cofactor biosynthesis; (R)-pantothenate biosynthesis; beta-alanine from L-aspartate: step 1/1. Functionally, catalyzes the pyruvoyl-dependent decarboxylation of aspartate to produce beta-alanine. This is Aspartate 1-decarboxylase from Campylobacter fetus subsp. fetus (strain 82-40).